Consider the following 711-residue polypeptide: Exotoxin translocation ATP-binding protein PaxB (711 aa).

In terms of domain architecture, Peptidase C39 spans Met-1–Leu-129. The next 5 helical transmembrane spans lie at Ile-157–Leu-177, Leu-195–Leu-215, Ala-273–Tyr-293, Ile-299–Leu-319, and Val-392–Gly-412. One can recognise an ABC transmembrane type-1 domain in the interval Phe-158 to Gln-440. The ABC transporter domain maps to Val-472 to Gln-707. Position 506–513 (Gly-506–Ser-513) interacts with ATP.

This sequence belongs to the ABC transporter superfamily. Protein-1 exporter (TC 3.A.1.109) family. In terms of assembly, homodimer.

It is found in the cell inner membrane. The catalysed reaction is ATP + H2O + proteinSide 1 = ADP + phosphate + proteinSide 2.. In terms of biological role, part of the ABC transporter complex PaxBD involved in PaxA export. Transmembrane domains (TMD) form a pore in the inner membrane and the ATP-binding domain (NBD) is responsible for energy generation. The protein is Exotoxin translocation ATP-binding protein PaxB (paxB) of Pasteurella aerogenes.